The following is a 270-amino-acid chain: Methionine-rich protein (270 aa).

An N-terminal signal peptide occupies residues M1 to A18. The segment covering Q31–S52 has biased composition (polar residues). The disordered stretch occupies residues Q31–P95. Positions P56–P95 are enriched in low complexity.

In terms of tissue distribution, component of the acid-soluble organic matrix of calcified layers of the shell (at protein level).

Its subcellular location is the secreted. The protein is Methionine-rich protein of Lottia gigantea (Giant owl limpet).